We begin with the raw amino-acid sequence, 152 residues long: Large ribosomal subunit protein bL9 (152 aa).

It belongs to the bacterial ribosomal protein bL9 family.

Its function is as follows. Binds to the 23S rRNA. This chain is Large ribosomal subunit protein bL9, found in Prochlorococcus marinus (strain NATL2A).